A 237-amino-acid chain; its full sequence is Uridylate kinase (237 aa).

11-14 (KLSG) provides a ligand contact to ATP. Residue G53 coordinates UMP. 2 residues coordinate ATP: G54 and R58. UMP contacts are provided by residues D73 and 134–141 (TGNPFFTT). Residues T161, Y167, and D170 each coordinate ATP.

Belongs to the UMP kinase family. As to quaternary structure, homohexamer.

It localises to the cytoplasm. It catalyses the reaction UMP + ATP = UDP + ADP. It participates in pyrimidine metabolism; CTP biosynthesis via de novo pathway; UDP from UMP (UMPK route): step 1/1. Inhibited by UTP. Its function is as follows. Catalyzes the reversible phosphorylation of UMP to UDP. The sequence is that of Uridylate kinase from Burkholderia thailandensis (strain ATCC 700388 / DSM 13276 / CCUG 48851 / CIP 106301 / E264).